Here is a 595-residue protein sequence, read N- to C-terminus: Phytoene desaturase (595 aa).

Residues 1–23 form the signal peptide; sequence MAETQRPRSAIIVGAGAGGIAVA. A helical membrane pass occupies residues 574–594; that stretch reads SQRAFPLLVALMGVLYFLLFV.

Belongs to the carotenoid/retinoid oxidoreductase family. The cofactor is NAD(+).

It is found in the membrane. The enzyme catalyses 15-cis-phytoene + A = all-trans-phytofluene + AH2. It catalyses the reaction all-trans-phytofluene + A = all-trans-zeta-carotene + AH2. The catalysed reaction is all-trans-zeta-carotene + A = all-trans-neurosporene + AH2. It carries out the reaction all-trans-neurosporene + A = all-trans-lycopene + AH2. The enzyme catalyses all-trans-lycopene + A = all-trans-3,4-didehydrolycopene + AH2. The protein operates within carotenoid biosynthesis; lycopene biosynthesis. Functionally, phytoene desaturase involved in the carotenoid biosynthesis pathway. Converts phytoene into 3,4-didehydrolycopene via the intermediates phytofluene, zeta-carotene, neurosporene and lycopene, by introducing up to five double bonds into phytoene. Is also able to desaturate 1-hydroxyneurosporene into 1-hydroxylycopene and 1-hydroxylycopene into 1-hydroxy-3,4-didehydrolycopene. Gamma-carotene and 1,19-dihydroxylycopene are not accepted as substrates. Neurosporaxanthin is synthesized from geranyl-geranyl pyrophosphate (GGPP) through several enzymatic activities. Phytoene synthase activity performed by the bifunctional enzyme al-2 first produces phytoene from geranyl-geranyl pyrophosphate (GGPP). The phytoene dehydrogenase al-1 then introduces 5 desaturations to lead to 3,4-didehydrolycopene via the intermediates phytofluene, zeta-carotene, neurosporene and lycopene. Al-2 cyclase activity then converts 3,4-didehydrolycopene into torulene. Al-2 can also convet lycopene into gamma-carotene which in turn is converted to beta-carotene by an additional al-2 cyclization reaction. Torulene is the substrate of the dioxidase cao-2 that breaks the molecule, removing five carbon atoms to yield beta-apo-4'-carotenal, whereas the aldehyde dehydrogenase ylo-1 mediates the last step by converting beta-apo-4'-carotenal into neurosporaxanthin. The polypeptide is Phytoene desaturase (Neurospora crassa (strain ATCC 24698 / 74-OR23-1A / CBS 708.71 / DSM 1257 / FGSC 987)).